A 370-amino-acid polypeptide reads, in one-letter code: Chloromuconate cycloisomerase (370 aa).

The active-site Proton acceptor is K165. Positions 194, 220, and 245 each coordinate Mn(2+). The active-site Proton donor is the E323.

This sequence belongs to the mandelate racemase/muconate lactonizing enzyme family. It depends on Mn(2+) as a cofactor.

The catalysed reaction is 2-[(2R)-2-chloro-2,5-dihydro-5-oxofuryl]acetate = 3-chloro-cis,cis-muconate + H(+). The protein operates within aromatic compound metabolism; 3-chlorocatechol degradation. The sequence is that of Chloromuconate cycloisomerase (tcbD) from Pseudomonas sp. (strain P51).